The sequence spans 267 residues: DNA repair protein RecO (267 aa).

The protein belongs to the RecO family.

In terms of biological role, involved in DNA repair and RecF pathway recombination. The polypeptide is DNA repair protein RecO (Moorella thermoacetica (strain ATCC 39073 / JCM 9320)).